Consider the following 182-residue polypeptide: Large ribosomal subunit protein uL5 (182 aa).

Belongs to the universal ribosomal protein uL5 family. In terms of assembly, part of the 50S ribosomal subunit; part of the 5S rRNA/L5/L18/L25 subcomplex. Contacts the 5S rRNA and the P site tRNA. Forms a bridge to the 30S subunit in the 70S ribosome.

Its function is as follows. This is one of the proteins that bind and probably mediate the attachment of the 5S RNA into the large ribosomal subunit, where it forms part of the central protuberance. In the 70S ribosome it contacts protein S13 of the 30S subunit (bridge B1b), connecting the 2 subunits; this bridge is implicated in subunit movement. Contacts the P site tRNA; the 5S rRNA and some of its associated proteins might help stabilize positioning of ribosome-bound tRNAs. The polypeptide is Large ribosomal subunit protein uL5 (Nostoc sp. (strain PCC 7120 / SAG 25.82 / UTEX 2576)).